A 902-amino-acid polypeptide reads, in one-letter code: Leucine-rich repeat-containing G-protein coupled receptor 5 (902 aa).

The N-terminal stretch at 1–22 is a signal peptide; the sequence is MDTSKTSFFLFSVLCSLQLVGA. The Extracellular segment spans residues 23 to 558; that stretch reads ARPGKQQRSC…HLFGSWLTRT (536 aa). 2 disulfides stabilise this stretch: Cys-32-Cys-38 and Cys-36-Cys-49. Residues 32 to 61 form the LRRNT domain; the sequence is CPTPCECEQEGMLVRVDCSDRALTSLPRNL. 17 LRR repeats span residues 41-61, 62-85, 86-109, 111-133, 134-157, 159-181, 182-205, 207-229, 230-253, 254-276, 278-300, 302-324, 325-347, 348-372, 374-393, 394-417, and 418-441; these read EGML…PRNL, SIFT…VMHN, LHFL…AFAG, GSLK…ALHN, LRSL…SFNG, FSLR…ALES, LSAL…AFRN, SSLV…CFDG, LHSL…IKTL, KNLK…AFIG, PSLI…AFQH, PELR…LTGT, TSLE…VCTQ, LPNL…GCQR, QKID…TFQQ, LVGL…SFSS, and LPSL…GLHG. Residues Asn-60 and Asn-74 are each glycosylated (N-linked (GlcNAc...) asparagine). Asn-205 carries N-linked (GlcNAc...) asparagine glycosylation. Cys-345 and Cys-370 form a disulfide bridge. The cysteines at positions 476 and 537 are disulfide-linked. An N-linked (GlcNAc...) asparagine glycan is attached at Asn-496. A helical membrane pass occupies residues 559–579; that stretch reads GVWLIVLLSFVCNALVIATVF. Residues 580–589 are Cytoplasmic-facing; that stretch reads RPLSYVPSIK. A helical transmembrane segment spans residues 590-610; it reads LLIGLIAIMNTLMGLSSGVLA. An LRR 18 repeat occupies 598–619; it reads MNTLMGLSSGVLATVDALTFGN. Topologically, residues 611-634 are extracellular; sequence TVDALTFGNFAQYGAWWESGVGCQ. Cys-633 and Cys-708 form a disulfide bridge. The chain crosses the membrane as a helical span at residues 635-655; the sequence is ITGFLSVFAAETSIFLLTVAA. Residues 656–678 lie on the Cytoplasmic side of the membrane; sequence LERGFSIKCTTKFETKSSFINVK. A helical membrane pass occupies residues 679–699; the sequence is LSIVFCFLLSIVIAVSPLLSG. Over 700 to 718 the chain is Extracellular; it reads STYGTSPLCFPLLFGDPSS. The helical transmembrane segment at 719–739 threads the bilayer; the sequence is MGFMVALVLLNSLCFLVMTIA. The Cytoplasmic portion of the chain corresponds to 740–763; that stretch reads YTKLYCSLEKGELENIWDCSMVKH. The helical transmembrane segment at 764–784 threads the bilayer; the sequence is IALLLFTNCILYCPVAFLSFS. Topologically, residues 785-798 are extracellular; it reads SLLNLTFISPEVNK. Residues Asn-788 and Asn-797 are each glycosylated (N-linked (GlcNAc...) asparagine). The helical transmembrane segment at 799-819 threads the bilayer; the sequence is SILLLIIPLPACLNPLLYILF. At 820–902 the chain is on the cytoplasmic side; sequence NPHFKEDIGS…LSAVAFVPCH (83 aa).

The protein belongs to the G-protein coupled receptor 1 family.

The protein localises to the cell membrane. The protein resides in the golgi apparatus. It localises to the trans-Golgi network membrane. Its function is as follows. Receptor for R-spondins that potentiates the canonical Wnt signaling pathway and acts as a stem cell marker of the intestinal epithelium and the hair follicle. Upon binding to R-spondins (RSPO1, RSPO2, RSPO3 or RSPO4), associates with phosphorylated LRP6 and frizzled receptors that are activated by extracellular Wnt receptors, triggering the canonical Wnt signaling pathway to increase expression of target genes. In contrast to classical G-protein coupled receptors, does not activate heterotrimeric G-proteins to transduce the signal. Involved in the development and/or maintenance of the adult intestinal stem cells during postembryonic development. The protein is Leucine-rich repeat-containing G-protein coupled receptor 5 (lgr5) of Xenopus tropicalis (Western clawed frog).